We begin with the raw amino-acid sequence, 308 residues long: Snake venom metalloprotease inhibitor 02D01 (308 aa).

The first 23 residues, 1 to 23, serve as a signal peptide directing secretion; that stretch reads MFVSRLAASGLLLLSLLALSLDG. A propeptide spanning residues 24–38 is cleaved from the precursor; it reads KPLPQRQPHHIQPME. Q39 bears the Pyrrolidone carboxylic acid mark. Positions 42 to 50 are excised as a propeptide; that stretch reads LAPDAPPLE. Q51 is subject to Pyrrolidone carboxylic acid. Positions 54-62 are excised as a propeptide; sequence LAPDAPPLE. A Pyrrolidone carboxylic acid modification is found at Q63. The propeptide occupies 66–74; that stretch reads LAPAAPPLE. Q75 carries the post-translational modification Pyrrolidone carboxylic acid. Residues 78–86 constitute a propeptide that is removed on maturation; the sequence is LAPDAPPME. Q87 carries the pyrrolidone carboxylic acid modification. A propeptide spanning residues 90-98 is cleaved from the precursor; it reads LAPDAPPME. Residue Q99 is modified to Pyrrolidone carboxylic acid. Positions 102–110 are excised as a propeptide; it reads LAPDAPPME. Q111 carries the post-translational modification Pyrrolidone carboxylic acid. The propeptide occupies 114–122; sequence LAPDAPPME. Pyrrolidone carboxylic acid is present on Q123. A propeptide spanning residues 126–134 is cleaved from the precursor; it reads LAPDAAPLE. Q135 is modified (pyrrolidone carboxylic acid). A propeptide spanning residues 138 to 146 is cleaved from the precursor; the sequence is LAPDAPPME. Residue Q147 is modified to Pyrrolidone carboxylic acid. A propeptide spanning residues 150-158 is cleaved from the precursor; it reads LAPDAPPME. At Q159 the chain carries Pyrrolidone carboxylic acid. Residues 162 to 249 constitute a propeptide that is removed on maturation; sequence QPQIPSLMEQ…KQASQKWGRL (88 aa). Positions 172 to 182 are enriched in polar residues; sequence RQLSSGGTTAL. Disordered regions lie at residues 172–228 and 252–279; these read RQLS…AAAT and HDHD…GARR. Over residues 198–209 the composition is skewed to gly residues; it reads VVGGGGGGGGGS. The segment covering 210-227 has biased composition (low complexity); it reads KAALALPKPPKAKGAAAA. Gly residues predominate over residues 265–277; sequence SVGGGGGGGGGGA. Positions 278–286 are excised as a propeptide; sequence RRLKGLAKK. C292 and C308 form a disulfide bridge.

This sequence in the C-terminal section; belongs to the natriuretic peptide family. It in the central section; belongs to the pHpG family. Expressed by the venom gland.

The protein localises to the secreted. Its function is as follows. pEKW and poly-His-poly-Gly peptides may serve as metalloproteinase inhibitors during glandular storage. Their inhibition may be instantly disengaged, by dilution or physiochemical change, when venom is injected into tissue of the prey. In terms of biological role, has a vasorelaxant activity in rat aortic strips and a diuretic potency in anesthetized rats. May act by activating natriuretic receptors (NPR1 and/or NPR2). The protein is Snake venom metalloprotease inhibitor 02D01 of Echis ocellatus (Ocellated saw-scaled viper).